The following is a 461-amino-acid chain: Argininosuccinate lyase (461 aa).

2-(N(omega)-L-arginino)succinate contacts are provided by Ser-28, Asn-115, and Thr-160. His-161 (proton acceptor) is an active-site residue. The active-site Proton donor is the Ser-282. Asn-290, Tyr-322, Gln-327, and Lys-330 together coordinate 2-(N(omega)-L-arginino)succinate.

This sequence belongs to the lyase 1 family. Argininosuccinate lyase subfamily. In terms of assembly, homotetramer.

The enzyme catalyses 2-(N(omega)-L-arginino)succinate = fumarate + L-arginine. Its pathway is amino-acid biosynthesis; L-arginine biosynthesis; L-arginine from L-ornithine and carbamoyl phosphate: step 3/3. This Schizosaccharomyces pombe (strain 972 / ATCC 24843) (Fission yeast) protein is Argininosuccinate lyase (arg7).